The primary structure comprises 276 residues: NAD-capped RNA hydrolase NudC (276 aa).

Residue Arg-82 coordinates substrate. Zn(2+) is bound by residues Cys-112 and Cys-115. Glu-125 is a substrate binding site. Positions 130 and 133 each coordinate Zn(2+). Substrate is bound at residue Tyr-138. Positions 139 to 262 (PRISPSMIVL…SIARYLIDLY (124 aa)) constitute a Nudix hydrolase domain. 3 residues coordinate a divalent metal cation: Ala-172, Glu-188, and Glu-192. The Nudix box signature appears at 173-194 (GFAEPGESAEECLVREVREEVA). 206-213 (QCWPFPHS) lines the substrate pocket. Residue Glu-233 participates in a divalent metal cation binding. A substrate-binding site is contributed by Ala-255.

It belongs to the Nudix hydrolase family. NudC subfamily. In terms of assembly, homodimer. Mg(2+) is required as a cofactor. Mn(2+) serves as cofactor. It depends on Zn(2+) as a cofactor.

It carries out the reaction a 5'-end NAD(+)-phospho-ribonucleoside in mRNA + H2O = a 5'-end phospho-adenosine-phospho-ribonucleoside in mRNA + beta-nicotinamide D-ribonucleotide + 2 H(+). The enzyme catalyses NAD(+) + H2O = beta-nicotinamide D-ribonucleotide + AMP + 2 H(+). It catalyses the reaction NADH + H2O = reduced beta-nicotinamide D-ribonucleotide + AMP + 2 H(+). Its function is as follows. mRNA decapping enzyme that specifically removes the nicotinamide adenine dinucleotide (NAD) cap from a subset of mRNAs by hydrolyzing the diphosphate linkage to produce nicotinamide mononucleotide (NMN) and 5' monophosphate mRNA. The NAD-cap is present at the 5'-end of some mRNAs and stabilizes RNA against 5'-processing. Has preference for mRNAs with a 5'-end purine. Catalyzes the hydrolysis of a broad range of dinucleotide pyrophosphates. The polypeptide is NAD-capped RNA hydrolase NudC (Pseudomonas entomophila (strain L48)).